Consider the following 386-residue polypeptide: Coproporphyrinogen-III oxidase 1, chloroplastic (386 aa).

A chloroplast-targeting transit peptide spans 1–48 (MASHSSTLLSSPTFAPFSSHRLHYSPNPSTLRFSRPIRNKPNLALRCS). Positions 125–134 (VLQDGNVFEK) are important for dimerization. Substrate is bound at residue Ser-174. His-188 serves as the catalytic Proton donor. Substrate is bound by residues 190–192 (NYR) and 344–349 (GGRIES). Residues 326–361 (YVEFNLVYDRGTTFGLKTGGRIESILVSLPLSARWE) form an important for dimerization region.

This sequence belongs to the aerobic coproporphyrinogen-III oxidase family. Homodimer. In terms of tissue distribution, expressed in cotyledons, leaves and roots.

The protein resides in the plastid. The protein localises to the chloroplast. It catalyses the reaction coproporphyrinogen III + O2 + 2 H(+) = protoporphyrinogen IX + 2 CO2 + 2 H2O. It functions in the pathway porphyrin-containing compound metabolism; protoporphyrin-IX biosynthesis; protoporphyrinogen-IX from coproporphyrinogen-III (O2 route): step 1/1. It participates in porphyrin-containing compound metabolism; chlorophyll biosynthesis. Key enzyme in heme biosynthesis. Catalyzes the oxidative decarboxylation of propionic acid side chains of rings A and B of coproporphyrinogen III. In Arabidopsis thaliana (Mouse-ear cress), this protein is Coproporphyrinogen-III oxidase 1, chloroplastic (CPX1).